A 58-amino-acid chain; its full sequence is Photosystem II reaction center protein K (58 aa).

A propeptide spanning residues 1–21 (MLVISNVYPSNLFTLINPFFA) is cleaved from the precursor. A helical transmembrane segment spans residues 29-49 (IFDPIVDVMPIIPVFFFLLAF).

Belongs to the PsbK family. As to quaternary structure, PSII is composed of 1 copy each of membrane proteins PsbA, PsbB, PsbC, PsbD, PsbE, PsbF, PsbH, PsbI, PsbJ, PsbK, PsbL, PsbM, PsbT, PsbX, PsbY, PsbZ, Psb30/Ycf12, at least 3 peripheral proteins of the oxygen-evolving complex and a large number of cofactors. It forms dimeric complexes.

The protein resides in the plastid. The protein localises to the chloroplast thylakoid membrane. In terms of biological role, one of the components of the core complex of photosystem II (PSII). PSII is a light-driven water:plastoquinone oxidoreductase that uses light energy to abstract electrons from H(2)O, generating O(2) and a proton gradient subsequently used for ATP formation. It consists of a core antenna complex that captures photons, and an electron transfer chain that converts photonic excitation into a charge separation. The sequence is that of Photosystem II reaction center protein K from Psilotum nudum (Whisk fern).